A 101-amino-acid chain; its full sequence is Putative pterin-4-alpha-carbinolamine dehydratase (101 aa).

It belongs to the pterin-4-alpha-carbinolamine dehydratase family.

The enzyme catalyses (4aS,6R)-4a-hydroxy-L-erythro-5,6,7,8-tetrahydrobiopterin = (6R)-L-erythro-6,7-dihydrobiopterin + H2O. This Rhizobium rhizogenes (strain K84 / ATCC BAA-868) (Agrobacterium radiobacter) protein is Putative pterin-4-alpha-carbinolamine dehydratase.